The chain runs to 182 residues: Keratin, type II cytoskeletal 68 kDa, component IA (182 aa).

The IF rod domain occupies Asp1–Met66. The tract at residues Asp1–Met66 is coil 2B. The tract at residues Ser67 to Ser86 is H2 subdomain. Positions Ser67 to Leu182 are tail. The interval Ser87 to Gly162 is V2 subdomain. Positions Gly104–Gly124 are enriched in gly residues. The interval Gly104 to Leu182 is disordered. Low complexity-rich tracts occupy residues Val144–Ser158 and Ser165–Gln176. The interval Arg163–Leu182 is E2 subdomain.

The protein belongs to the intermediate filament family. In terms of assembly, heterotetramer of two type I and two type II keratins.

The chain is Keratin, type II cytoskeletal 68 kDa, component IA from Bos taurus (Bovine).